Consider the following 1083-residue polypeptide: Glutamate receptor-interacting protein 2 (1083 aa).

3 PDZ domains span residues 58-141 (IVEL…EYEL), 156-244 (TIEI…EYDV), and 258-342 (LVEI…LPAH). A compositionally biased stretch (polar residues) spans 408 to 422 (AGTPGFSSQNSNTLP). Residues 408 to 460 (AGTPGFSSQNSNTLPRTVHPMSPRTTMNRRRQKRKDHKSSLSLASSTVGPGGQ) are disordered. Over residues 434-444 (MNRRRQKRKDH) the composition is skewed to basic residues. PDZ domains lie at 468–555 (EIIL…EIEF), 569–652 (HVKL…RKDE), and 667–749 (TVEL…KKQT). 3 disordered regions span residues 754–783 (PQRLSDSMNEGSDPEDDLTDSQKTSKLSEI), 853–872 (NEQDWEKPTRYPSQPNGLET), and 936–965 (GSHHISSNSPKKENKLSQDARSKKEEVHNA). Polar residues predominate over residues 774–783 (SQKTSKLSEI). The span at 945 to 963 (PKKENKLSQDARSKKEEVH) shows a compositional bias: basic and acidic residues. The PDZ 7 domain maps to 974–1056 (KVTVQKDMDT…RLDLVISRGL (83 aa)).

This sequence belongs to the GRIP2 family. Enriched in the mitochondrial cloud of stage I oocytes, before becoming concentrated at the tip of the vegetal cortex in stage II oocytes. Expression becomes localized to the germ plasm of stage III-IV oocytes and early cleavage stages. At the tailbud stage, localizes to the migrating primordial germ cells (PGCs) until PGC migration is complete (stage 40), at which point expression disappears. In the adult, expressed in the brain, ovary, eye, muscle, spinal cord and very weakly in adipocytes.

It localises to the cytoplasm. Plays an important role in primordial germ cell (PGC) maintenance and efficiency of PGC migration. This is Glutamate receptor-interacting protein 2 from Xenopus laevis (African clawed frog).